The primary structure comprises 87 residues: DNA-directed RNA polymerase subunit omega (87 aa).

Belongs to the RNA polymerase subunit omega family. As to quaternary structure, the RNAP catalytic core consists of 2 alpha, 1 beta, 1 beta' and 1 omega subunit. When a sigma factor is associated with the core the holoenzyme is formed, which can initiate transcription.

It carries out the reaction RNA(n) + a ribonucleoside 5'-triphosphate = RNA(n+1) + diphosphate. Functionally, promotes RNA polymerase assembly. Latches the N- and C-terminal regions of the beta' subunit thereby facilitating its interaction with the beta and alpha subunits. This is DNA-directed RNA polymerase subunit omega from Pseudomonas putida (strain W619).